Here is a 500-residue protein sequence, read N- to C-terminus: Citrate lyase alpha chain (500 aa).

As to quaternary structure, oligomer with a subunit composition of (alpha,beta,gamma)6.

It localises to the cytoplasm. The catalysed reaction is citrate = oxaloacetate + acetate. The enzyme catalyses citrate + acetyl-CoA = (3S)-citryl-CoA + acetate. Its function is as follows. Represents a citrate:acetyl-ACP transferase. The protein is Citrate lyase alpha chain (citF) of Haemophilus influenzae (strain ATCC 51907 / DSM 11121 / KW20 / Rd).